The primary structure comprises 357 residues: MFLEKLNSATSRIKSIEEKLQDINLIKNQKKYSKIIKEYTYLEKINTKKIEYENILNQINDNKTILEKEEQQEMKELIKQELIDLDKKKENLEHEIKILLLPQDENDSKNIIIEIRAGTGGEEAALFANNLYSMYIKYSEKKKWKTEIINFNETELGGFKEIIFEIKGKDVFKKLKYESGVHRVQRIPITESNGRLQTSAATVAVLPNIEETEIDINEKDLRIDVYRSSGAGGQHVNTTDSAVRITHLPTGIVVQCQNERSQHKNKDQAMKILRARLYEFEDSKKQEQRSNNRKQQVGSGDRSERIRTYNFPQNRITDHRANITLYKLEEFMQGELDQLLDPLTIELQEQTLKSNNI.

Gln234 is subject to N5-methylglutamine. The disordered stretch occupies residues 282–313 (DSKKQEQRSNNRKQQVGSGDRSERIRTYNFPQ).

Belongs to the prokaryotic/mitochondrial release factor family. Methylated by PrmC. Methylation increases the termination efficiency of RF1.

Its subcellular location is the cytoplasm. Peptide chain release factor 1 directs the termination of translation in response to the peptide chain termination codons UAG and UAA. This chain is Peptide chain release factor 1, found in Borreliella afzelii (strain PKo) (Borrelia afzelii).